The chain runs to 432 residues: D-amino acid dehydrogenase (432 aa).

3 to 17 lines the FAD pocket; the sequence is VVILGSGVVGVTSAW.

This sequence belongs to the DadA oxidoreductase family. The cofactor is FAD.

The enzyme catalyses a D-alpha-amino acid + A + H2O = a 2-oxocarboxylate + AH2 + NH4(+). The protein operates within amino-acid degradation; D-alanine degradation; NH(3) and pyruvate from D-alanine: step 1/1. Its function is as follows. Oxidative deamination of D-amino acids. In Salmonella arizonae (strain ATCC BAA-731 / CDC346-86 / RSK2980), this protein is D-amino acid dehydrogenase.